Here is a 244-residue protein sequence, read N- to C-terminus: MNGPADGEVDYKKKYRNLKRKLKFLIYEHECFQEELRKAQRKLLKVSRDKSFLLDRLLQYENVDEDSSDSDATASSDNSETEGTPKLSDTPAPKRKRSPPLGGAPSPSSLSLPPSTGFPLQASGVPSPYLSSLASSRYPPFPSDYLALQLPEPSPLRPKREKRPRLPRKLKMAVGPPDCPVGGPLTFPGRGSGAGVGTTLTPLPPPKMPPPTILSTVPRQMFSDAGSGDDALDGDDDLVIDIPE.

Residues Asp10–Leu54 are a coiled coil. Positions Val63–Asp236 are disordered. Residues Pro99–Ser115 show a composition bias toward low complexity. Positions Arg157–Lys171 are enriched in basic residues. Residues Lys159 and Lys171 each participate in a glycyl lysine isopeptide (Lys-Gly) (interchain with G-Cter in SUMO2) cross-link. The segment covering Pro202–Thr212 has biased composition (pro residues).

As to quaternary structure, component of the chromatin remodeling INO80 complex; specifically part of a complex module associated with the N-terminus of INO80.

Its subcellular location is the nucleus. In terms of biological role, putative regulatory component of the chromatin remodeling INO80 complex which is involved in transcriptional regulation, DNA replication and probably DNA repair. The protein is INO80 complex subunit E (INO80E) of Homo sapiens (Human).